The sequence spans 231 residues: Orotate phosphoribosyltransferase (231 aa).

5-phospho-alpha-D-ribose 1-diphosphate contacts are provided by residues lysine 27, 79–80 (YK), arginine 106, lysine 107, lysine 110, histidine 112, and 133–141 (DDVMTAGTA). Residues threonine 137 and arginine 166 each coordinate orotate.

It belongs to the purine/pyrimidine phosphoribosyltransferase family. PyrE subfamily. In terms of assembly, homodimer. Requires Mg(2+) as cofactor.

It carries out the reaction orotidine 5'-phosphate + diphosphate = orotate + 5-phospho-alpha-D-ribose 1-diphosphate. It functions in the pathway pyrimidine metabolism; UMP biosynthesis via de novo pathway; UMP from orotate: step 1/2. Functionally, catalyzes the transfer of a ribosyl phosphate group from 5-phosphoribose 1-diphosphate to orotate, leading to the formation of orotidine monophosphate (OMP). The protein is Orotate phosphoribosyltransferase of Bifidobacterium adolescentis (strain ATCC 15703 / DSM 20083 / NCTC 11814 / E194a).